The primary structure comprises 606 residues: Dihydroxy-acid dehydratase ilvC, mitochondrial (606 aa).

Cys84 serves as a coordination point for [2Fe-2S] cluster. Position 116 (Asp116) interacts with Mg(2+). Cys157 contacts [2Fe-2S] cluster. Residue Asp158 participates in Mg(2+) binding. Cys232 serves as a coordination point for [2Fe-2S] cluster. Residue Glu485 participates in Mg(2+) binding. The active-site Proton acceptor is Ser511.

This sequence belongs to the IlvD/Edd family. It depends on [2Fe-2S] cluster as a cofactor. Mg(2+) serves as cofactor.

The protein resides in the mitochondrion. It catalyses the reaction (2R)-2,3-dihydroxy-3-methylbutanoate = 3-methyl-2-oxobutanoate + H2O. It carries out the reaction (2R,3R)-2,3-dihydroxy-3-methylpentanoate = (S)-3-methyl-2-oxopentanoate + H2O. It participates in amino-acid biosynthesis; L-isoleucine biosynthesis; L-isoleucine from 2-oxobutanoate: step 3/4. The protein operates within amino-acid biosynthesis; L-valine biosynthesis; L-valine from pyruvate: step 3/4. Its activity is regulated as follows. DHAD activity is inhibited in dose-dependent manner by 2-hydroxy-3-methylbutyric acid with an IC(50) of about 8 mM. Dihydroxyacid dehydratase that catalyzes the third step in the common pathway leading to biosynthesis of branched-chain amino acids. Catalyzes the dehydration of (2R,3R)-2,3-dihydroxy-3-methylpentanoate (2,3-dihydroxy-3-methylvalerate) into 2-oxo-3-methylpentanoate (2-oxo-3-methylvalerate) and of (2R)-2,3-dihydroxy-3-methylbutanoate (2,3-dihydroxyisovalerate) into 2-oxo-3-methylbutanoate (2-oxoisovalerate), the penultimate precursor to L-isoleucine and L-valine, respectively. IlvC and the branched-chain amino acid biosynthesis are crucial for virulence and may be a potential target to develop antifungal agents. This Aspergillus fumigatus (strain ATCC MYA-4609 / CBS 101355 / FGSC A1100 / Af293) (Neosartorya fumigata) protein is Dihydroxy-acid dehydratase ilvC, mitochondrial.